The chain runs to 90 residues: Small ribosomal subunit protein uS17 (90 aa).

Belongs to the universal ribosomal protein uS17 family. In terms of assembly, part of the 30S ribosomal subunit.

One of the primary rRNA binding proteins, it binds specifically to the 5'-end of 16S ribosomal RNA. This Paraburkholderia phytofirmans (strain DSM 17436 / LMG 22146 / PsJN) (Burkholderia phytofirmans) protein is Small ribosomal subunit protein uS17.